A 138-amino-acid chain; its full sequence is Acidic phospholipase A2 5 (138 aa).

The signal sequence occupies residues M1 to G16. 7 cysteine pairs are disulfide-bonded: C42–C131, C44–C60, C59–C111, C65–C138, C66–C104, C73–C97, and C91–C102. Ca(2+)-binding residues include Y43, G45, and G47. H63 is a catalytic residue. D64 serves as a coordination point for Ca(2+). D105 is an active-site residue.

Belongs to the phospholipase A2 family. Group II subfamily. D49 sub-subfamily. Ca(2+) is required as a cofactor. In terms of tissue distribution, expressed by the venom gland.

Its subcellular location is the secreted. It carries out the reaction a 1,2-diacyl-sn-glycero-3-phosphocholine + H2O = a 1-acyl-sn-glycero-3-phosphocholine + a fatty acid + H(+). In terms of biological role, PLA2 catalyzes the calcium-dependent hydrolysis of the 2-acyl groups in 3-sn-phosphoglycerides. This Echis ocellatus (Ocellated saw-scaled viper) protein is Acidic phospholipase A2 5.